A 92-amino-acid polypeptide reads, in one-letter code: Small ribosomal subunit protein uS19c (92 aa).

This sequence belongs to the universal ribosomal protein uS19 family.

The protein localises to the plastid. The protein resides in the chloroplast. Protein S19 forms a complex with S13 that binds strongly to the 16S ribosomal RNA. This Tupiella akineta (Green alga) protein is Small ribosomal subunit protein uS19c.